We begin with the raw amino-acid sequence, 88 residues long: ATP synthase epsilon chain (88 aa).

This sequence belongs to the ATPase epsilon chain family. In terms of assembly, F-type ATPases have 2 components, CF(1) - the catalytic core - and CF(0) - the membrane proton channel. CF(1) has five subunits: alpha(3), beta(3), gamma(1), delta(1), epsilon(1). CF(0) has three main subunits: a, b and c.

It is found in the cell inner membrane. In terms of biological role, produces ATP from ADP in the presence of a proton gradient across the membrane. In Chlorobium limicola, this protein is ATP synthase epsilon chain (atpC).